We begin with the raw amino-acid sequence, 582 residues long: MNQNGTRLCYSVREVPPTSFVSAPANYKRASSHCTYTIPAASALTVLYYPFFTAQDRCKICILITIAILATLPWDSYLIRSAIWTYPPDAVVGLKILDIPIEEVFFFAIQTYITSLTYCIFTKPLVRPMYLRSHLERRGTRYVVATVILALMGGGTACLLLGRRMTYLGLILVWACPILLFQWMMSYPFLSELPWKPTITSICLPTLHLWFADSRAMGTGTWRIEEGTKLNFRIGGLELEEALFFLVSNMMVVLGLVGCDYAYALQEYESLSQPASDVYITLRKALSLLARPLPIDASLISALSQAVYRLQEKSQSMFLGSALFQGQLRIDLIFLYSFCRVMDDLIDEAEDEQEARFWVTECRHLLDSTHRSEPHSDHFYTGKKGEEHERLRQSISYLPPSHLSNDSFDDLLKGFEIDLKFNPQREAFPIQSEYCLDQYAGFVAGTVGVLVFDLTLFHCGHYFIQDVPRLRRAAKDMGKAMQCQPRGDGGATSGRKRAIAGNRGELYGYWTTAEGAERHKPGASVEDEGAFGATAKSWLAGDVITELCHCFIQAEYVIYLVRHQNASADTLVLLSALVYRLE.

Residues 1 to 261 (MNQNGTRLCY…VVLGLVGCDY (261 aa)) form a lycopene beta-cyclase region. 6 consecutive transmembrane segments (helical) span residues 34–54 (CTYTIPAASALTVLYYPFFTA), 59–79 (KICILITIAILATLPWDSYLI), 99–121 (IPIEEVFFFAIQTYITSLTYCIF), 142–162 (YVVATVILALMGGGTACLLLG), 170–190 (LILVWACPILLFQWMMSYPFL), and 242–262 (ALFFLVSNMMVVLGLVGCDYA). The segment at 268-582 (YESLSQPASD…LLSALVYRLE (315 aa)) is phytoene synthase.

The protein in the N-terminal section; belongs to the lycopene beta-cyclase family. This sequence in the C-terminal section; belongs to the phytoene/squalene synthase family.

It localises to the membrane. It carries out the reaction all-trans-lycopene = gamma-carotene. The enzyme catalyses gamma-carotene = all-trans-beta-carotene. It catalyses the reaction 2 (2E,6E,10E)-geranylgeranyl diphosphate = 15-cis-phytoene + 2 diphosphate. Its pathway is carotenoid biosynthesis; beta-carotene biosynthesis. It functions in the pathway carotenoid biosynthesis; phytoene biosynthesis; all-trans-phytoene from geranylgeranyl diphosphate: step 1/1. Bifunctional enzyme that catalyzes the reactions from geranylgeranyl diphosphate to phytoene (phytoene synthase) and lycopene to beta-carotene via the intermediate gamma-carotene (lycopene cyclase). The polypeptide is Bifunctional lycopene cyclase/phytoene synthase (Aspergillus niger (strain ATCC MYA-4892 / CBS 513.88 / FGSC A1513)).